Here is a 172-residue protein sequence, read N- to C-terminus: Adenine phosphoribosyltransferase (172 aa).

Belongs to the purine/pyrimidine phosphoribosyltransferase family. In terms of assembly, homodimer.

It localises to the cytoplasm. It catalyses the reaction AMP + diphosphate = 5-phospho-alpha-D-ribose 1-diphosphate + adenine. It functions in the pathway purine metabolism; AMP biosynthesis via salvage pathway; AMP from adenine: step 1/1. Functionally, catalyzes a salvage reaction resulting in the formation of AMP, that is energically less costly than de novo synthesis. The chain is Adenine phosphoribosyltransferase from Clostridium tetani (strain Massachusetts / E88).